The chain runs to 200 residues: Small ribosomal subunit protein uS4 (200 aa).

Positions 22–43 are disordered; it reads TGKELERRPYAPGQHGPTQRKK. An S4 RNA-binding domain is found at 92-170; it reads QRLDNIVYRL…VPEYVTFDAE (79 aa).

Belongs to the universal ribosomal protein uS4 family. As to quaternary structure, part of the 30S ribosomal subunit. Contacts protein S5. The interaction surface between S4 and S5 is involved in control of translational fidelity.

Its function is as follows. One of the primary rRNA binding proteins, it binds directly to 16S rRNA where it nucleates assembly of the body of the 30S subunit. With S5 and S12 plays an important role in translational accuracy. The sequence is that of Small ribosomal subunit protein uS4 from Listeria monocytogenes serotype 4a (strain HCC23).